A 504-amino-acid polypeptide reads, in one-letter code: NADH-quinone oxidoreductase subunit N (504 aa).

Helical transmembrane passes span 9-29, 38-58, 78-98, 114-134, 135-155, 164-184, 216-236, 254-274, 282-302, 309-329, 341-361, 392-412, 425-447, and 476-496; these read IALL…LSII, AVLT…HMMW, VLYV…GYVW, LLIA…IVLF, LGIE…VFSK, YIIL…FIYC, IVIG…CVPF, YLAT…LLIL, LHIF…LMAI, RMLA…LIAL, ISVY…IVNI, VIFV…GFIG, LWFL…LKII, and FMVI…QFIV.

Belongs to the complex I subunit 2 family. NDH-1 is composed of 13 different subunits. Subunits NuoA, H, J, K, L, M, N constitute the membrane sector of the complex.

The protein resides in the cell inner membrane. It catalyses the reaction a quinone + NADH + 5 H(+)(in) = a quinol + NAD(+) + 4 H(+)(out). Its function is as follows. NDH-1 shuttles electrons from NADH, via FMN and iron-sulfur (Fe-S) centers, to quinones in the respiratory chain. The immediate electron acceptor for the enzyme in this species is believed to be ubiquinone. Couples the redox reaction to proton translocation (for every two electrons transferred, four hydrogen ions are translocated across the cytoplasmic membrane), and thus conserves the redox energy in a proton gradient. This chain is NADH-quinone oxidoreductase subunit N, found in Blochmanniella floridana.